A 116-amino-acid chain; its full sequence is Large ribosomal subunit protein bL17 (116 aa).

This sequence belongs to the bacterial ribosomal protein bL17 family. In terms of assembly, part of the 50S ribosomal subunit. Contacts protein L32.

This is Large ribosomal subunit protein bL17 from Synechococcus sp. (strain CC9902).